A 118-amino-acid polypeptide reads, in one-letter code: Large ribosomal subunit protein bL20 (118 aa).

It belongs to the bacterial ribosomal protein bL20 family.

Functionally, binds directly to 23S ribosomal RNA and is necessary for the in vitro assembly process of the 50S ribosomal subunit. It is not involved in the protein synthesizing functions of that subunit. The polypeptide is Large ribosomal subunit protein bL20 (Synechococcus sp. (strain JA-2-3B'a(2-13)) (Cyanobacteria bacterium Yellowstone B-Prime)).